A 371-amino-acid polypeptide reads, in one-letter code: Aspartate-semialdehyde dehydrogenase (371 aa).

NADP(+) contacts are provided by residues 11–14 (RGMV), 38–39 (TS), and glutamine 75. A phosphate-binding site is contributed by arginine 104. Cysteine 137 serves as the catalytic Acyl-thioester intermediate. Glutamine 164 is a substrate binding site. 167–168 (SG) is an NADP(+) binding site. Glutamate 243 serves as a coordination point for substrate. Position 246 (lysine 246) interacts with phosphate. A substrate-binding site is contributed by arginine 269. Histidine 276 functions as the Proton acceptor in the catalytic mechanism. NADP(+) is bound at residue glutamine 352.

This sequence belongs to the aspartate-semialdehyde dehydrogenase family. As to quaternary structure, homodimer.

It carries out the reaction L-aspartate 4-semialdehyde + phosphate + NADP(+) = 4-phospho-L-aspartate + NADPH + H(+). It participates in amino-acid biosynthesis; L-lysine biosynthesis via DAP pathway; (S)-tetrahydrodipicolinate from L-aspartate: step 2/4. The protein operates within amino-acid biosynthesis; L-methionine biosynthesis via de novo pathway; L-homoserine from L-aspartate: step 2/3. It functions in the pathway amino-acid biosynthesis; L-threonine biosynthesis; L-threonine from L-aspartate: step 2/5. Catalyzes the NADPH-dependent formation of L-aspartate-semialdehyde (L-ASA) by the reductive dephosphorylation of L-aspartyl-4-phosphate. This Buchnera aphidicola subsp. Acyrthosiphon pisum (strain APS) (Acyrthosiphon pisum symbiotic bacterium) protein is Aspartate-semialdehyde dehydrogenase.